The primary structure comprises 274 residues: tRNA pseudouridine synthase A (274 aa).

The Nucleophile role is filled by aspartate 57. Tyrosine 115 contributes to the substrate binding site.

It belongs to the tRNA pseudouridine synthase TruA family. Homodimer.

It catalyses the reaction uridine(38/39/40) in tRNA = pseudouridine(38/39/40) in tRNA. Formation of pseudouridine at positions 38, 39 and 40 in the anticodon stem and loop of transfer RNAs. This Frankia casuarinae (strain DSM 45818 / CECT 9043 / HFP020203 / CcI3) protein is tRNA pseudouridine synthase A.